The following is a 39-amino-acid chain: Natriuretic peptide NsNP-b (39 aa).

A propeptide spanning residues 1–8 (SGSKTAKI) is cleaved from the precursor. A disulfide bond links Cys-12 and Cys-28. The tract at residues 19–39 (RIGSTSGMGCGSVPKPTPGGS) is disordered.

Belongs to the natriuretic peptide family. Expressed by the venom gland.

The protein resides in the secreted. Functionally, snake venom natriuretic peptide that targets both NPR1 and NPR2. Exhibits hypotensive and vasodepressor activities. The sequence is that of Natriuretic peptide NsNP-b from Notechis scutatus scutatus (Mainland tiger snake).